The primary structure comprises 163 residues: Cytochrome c-type biogenesis protein CcmE (163 aa).

The Cytoplasmic portion of the chain corresponds to Met-1 to Arg-8. Residues Leu-9 to Ala-29 form a helical; Signal-anchor for type II membrane protein membrane-spanning segment. Over Leu-30–Gln-163 the chain is Periplasmic. 2 residues coordinate heme: His-131 and Tyr-135.

Belongs to the CcmE/CycJ family.

It localises to the cell inner membrane. In terms of biological role, heme chaperone required for the biogenesis of c-type cytochromes. Transiently binds heme delivered by CcmC and transfers the heme to apo-cytochromes in a process facilitated by CcmF and CcmH. This chain is Cytochrome c-type biogenesis protein CcmE, found in Aeromonas hydrophila subsp. hydrophila (strain ATCC 7966 / DSM 30187 / BCRC 13018 / CCUG 14551 / JCM 1027 / KCTC 2358 / NCIMB 9240 / NCTC 8049).